Consider the following 417-residue polypeptide: Probable diacetyl reductase [(R)-acetoin forming] 2 (417 aa).

Cys-39 contributes to the Zn(2+) binding site. At Ser-63 the chain carries Phosphoserine. 5 residues coordinate Zn(2+): His-64, Cys-120, Cys-123, Cys-131, and Gln-173. The interval 380-417 is disordered; that stretch reads GELNREADNEKKEISELSSRKDQERLRESINEAKLRHT. Positions 381-417 are enriched in basic and acidic residues; it reads ELNREADNEKKEISELSSRKDQERLRESINEAKLRHT.

It belongs to the zinc-containing alcohol dehydrogenase family. Requires Zn(2+) as cofactor.

The protein resides in the cytoplasm. Its subcellular location is the nucleus. The catalysed reaction is (R)-acetoin + NAD(+) = diacetyl + NADH + H(+). Its function is as follows. Catalyzes the irreversible reduction of 2,3-butanediol to (S)-acetoin in the presence of NADH. This chain is Probable diacetyl reductase [(R)-acetoin forming] 2 (BDH2), found in Saccharomyces cerevisiae (strain ATCC 204508 / S288c) (Baker's yeast).